A 353-amino-acid chain; its full sequence is D-alanine--D-alanine ligase (353 aa).

Residues 141–349 (KAAFAAAGLP…LPDLVAQLVH (209 aa)) enclose the ATP-grasp domain. 176–231 (EAELGYPCFVKPANMGSSVGISKARHRDQLLAGLKEAARHDTRLVVEHGVSARELE) is an ATP binding site. Residues D302, E316, and N318 each coordinate Mg(2+).

Belongs to the D-alanine--D-alanine ligase family. Mg(2+) serves as cofactor. It depends on Mn(2+) as a cofactor.

The protein localises to the cytoplasm. It catalyses the reaction 2 D-alanine + ATP = D-alanyl-D-alanine + ADP + phosphate + H(+). The protein operates within cell wall biogenesis; peptidoglycan biosynthesis. Its function is as follows. Cell wall formation. The chain is D-alanine--D-alanine ligase from Synechococcus sp. (strain CC9311).